Reading from the N-terminus, the 126-residue chain is Phosphoribosyl-AMP cyclohydrolase (126 aa).

D73 contributes to the Mg(2+) binding site. C74 is a Zn(2+) binding site. Residues D75 and D77 each contribute to the Mg(2+) site. Zn(2+) is bound by residues C91 and C98.

Belongs to the PRA-CH family. As to quaternary structure, homodimer. The cofactor is Mg(2+). It depends on Zn(2+) as a cofactor.

It is found in the cytoplasm. The enzyme catalyses 1-(5-phospho-beta-D-ribosyl)-5'-AMP + H2O = 1-(5-phospho-beta-D-ribosyl)-5-[(5-phospho-beta-D-ribosylamino)methylideneamino]imidazole-4-carboxamide. The protein operates within amino-acid biosynthesis; L-histidine biosynthesis; L-histidine from 5-phospho-alpha-D-ribose 1-diphosphate: step 3/9. Its function is as follows. Catalyzes the hydrolysis of the adenine ring of phosphoribosyl-AMP. The polypeptide is Phosphoribosyl-AMP cyclohydrolase (Solibacter usitatus (strain Ellin6076)).